Consider the following 227-residue polypeptide: GFP-like non-fluorescent chromoprotein (227 aa).

Positions 63–65 form a cross-link, 2-iminomethyl-5-imidazolinone (Glu-Gly); sequence EYG. Tyr-64 carries the post-translational modification 2,3-didehydrotyrosine.

This sequence belongs to the GFP family. In terms of assembly, homotetramer. Contains a chromophore consisting of modified amino acid residues. The chromophore is formed by autocatalytic backbone condensation between Xaa-N and Gly-(N+2), oxidation of Tyr-(N+1) to didehydrotyrosine, and formation of a double bond to the alpha-amino nitrogen of residue Xaa-N. Maturation of the chromophore requires nothing other than molecular oxygen. The precise stereochemistry of the tyrosine has not been determined.

In terms of biological role, non-fluorescent pigment protein that is lilac in color. The protein is GFP-like non-fluorescent chromoprotein of Radianthus crispa (Leathery sea anemone).